Here is a 216-residue protein sequence, read N- to C-terminus: Phosphoenolpyruvate guanylyltransferase (216 aa).

3 residues coordinate phosphoenolpyruvate: T150, G165, and S168.

It belongs to the CofC family.

The enzyme catalyses phosphoenolpyruvate + GTP + H(+) = enolpyruvoyl-2-diphospho-5'-guanosine + diphosphate. Its pathway is cofactor biosynthesis; coenzyme F420 biosynthesis. Guanylyltransferase that catalyzes the activation of phosphoenolpyruvate (PEP) as enolpyruvoyl-2-diphospho-5'-guanosine, via the condensation of PEP with GTP. It is involved in the biosynthesis of coenzyme F420, a hydride carrier cofactor. This is Phosphoenolpyruvate guanylyltransferase from Mycobacterium leprae (strain Br4923).